The following is a 132-amino-acid chain: Bombinin-like peptides (132 aa).

Residues 1 to 18 (MNFKYIIAVSFLIASAYA) form the signal peptide. Positions 19–42 (RSEEYDIQSLSQRDVLEEESLRKI) are excised as a propeptide. Phe-68 carries the post-translational modification Phenylalanine amide. Residues 72 to 112 (TAEDHEVMKRLEAAMRDLDSLDYPEEASERETRGFNQEEKE) constitute a propeptide that is removed on maturation. At Leu-131 the chain carries Leucine amide.

The protein belongs to the bombinin family. As to expression, expressed by the skin glands.

The protein resides in the secreted. Has antimicrobial activity against Gram-negative bacterium E.coli (MIC=26.3 uM), Gram-positive bacterium S.aureus (MIC=26.3 uM) and yeast C.albicans (MIC=52.5 uM). Has moderate hemolytic activity towards human erythrocytes at a concentration of 52.2 uM. Its function is as follows. Has no antimicrobial activity at concentrations up to 161 uM. Has moderate hemolytic activity towards human erythrocytes at a concentration of 40.3 uM. The sequence is that of Bombinin-like peptides from Bombina orientalis (Oriental fire-bellied toad).